Here is a 224-residue protein sequence, read N- to C-terminus: Large ribosomal subunit protein bL25 (224 aa).

The segment at 190 to 224 (EPAPAAEGAAPAEGAAAAAAGGKPAAKTAKPAAKK) is disordered.

It belongs to the bacterial ribosomal protein bL25 family. CTC subfamily. Part of the 50S ribosomal subunit; part of the 5S rRNA/L5/L18/L25 subcomplex. Contacts the 5S rRNA. Binds to the 5S rRNA independently of L5 and L18.

Its function is as follows. This is one of the proteins that binds to the 5S RNA in the ribosome where it forms part of the central protuberance. This Variovorax paradoxus (strain S110) protein is Large ribosomal subunit protein bL25.